A 270-amino-acid chain; its full sequence is Basigin (270 aa).

Residues 1-21 form the signal peptide; the sequence is MAAVLFALLALALLRAGGASA. The Ig-like C2-type domain occupies 22–103; it reads AAGTVTTSVQ…TGEATLTVDG (82 aa). Over 22–207 the chain is Extracellular; it reads AAGTVTTSVQ…VTLRVRSRLA (186 aa). Cystine bridges form between cysteine 41–cysteine 87 and cysteine 126–cysteine 185. 4 N-linked (GlcNAc...) asparagine glycosylation sites follow: asparagine 44, asparagine 75, asparagine 152, and asparagine 186. In terms of domain architecture, Ig-like V-type spans 105-203; the sequence is PRIKAVKKSE…DAAVVTLRVR (99 aa). A helical transmembrane segment spans residues 208-228; sequence ALWPFLGIVAEVLVLVTVIFI. The Cytoplasmic portion of the chain corresponds to 229 to 270; that stretch reads YEKRRKPDEVLDDEDAGAAPLKSSGHHVNDDKGKNVRQRNAS. A disordered region spans residues 239–270; it reads LDDEDAGAAPLKSSGHHVNDDKGKNVRQRNAS. Phosphoserine is present on serine 252.

In terms of assembly, homooligomer. Interacts with VEGFA, KDR/VEGFR2, PPIA/CYPA, SLC1A3, SLC16A12, SLC16A11, ATP1B2, MAG, L1CAM and AJAP1. Interacts with PPIL2; regulates BSG transport to the cell membrane. Interacts with XKR8; promoting its localization at the cell membrane. Interacts with SLC16A3; interaction mediates SLC16A3 targeting to the plasma membrane. Interacts with SLC16A1; interaction mediates SLC16A1 targeting to the plasma membrane. Interacts with SLC16A6; this interaction mediates targeting to the plasma membrane.

The protein localises to the cell membrane. It localises to the endoplasmic reticulum membrane. It is found in the basolateral cell membrane. Functionally, signaling receptor for cyclophilins, essential for PPIA/CYPA and PPIB/CYPB-dependent signaling related to chemotaxis and adhesion of immune cells. Plays an important role in targeting the monocarboxylate transporters SLC16A1/GLUT1, SLC16A3, SLC16A8, SLC16A11 and SLC16A12 to the plasma membrane. Acts as a coreceptor for vascular endothelial growth factor receptor 2 (KDR/VEGFR2) in endothelial cells enhancing its VEGFA-mediated activation and downstream signaling. Promotes angiogenesis through EPAS1/HIF2A-mediated up-regulation of VEGFA and KDR/VEGFR2 in endothelial cells. The polypeptide is Basigin (BSG) (Oryctolagus cuniculus (Rabbit)).